The sequence spans 194 residues: Crossover junction endodeoxyribonuclease RuvC (194 aa).

Residues Asp-8, Glu-72, and Asp-144 contribute to the active site. Residues Asp-8, Glu-72, and Asp-144 each coordinate Mg(2+).

It belongs to the RuvC family. In terms of assembly, homodimer which binds Holliday junction (HJ) DNA. The HJ becomes 2-fold symmetrical on binding to RuvC with unstacked arms; it has a different conformation from HJ DNA in complex with RuvA. In the full resolvosome a probable DNA-RuvA(4)-RuvB(12)-RuvC(2) complex forms which resolves the HJ. Mg(2+) serves as cofactor.

The protein localises to the cytoplasm. It carries out the reaction Endonucleolytic cleavage at a junction such as a reciprocal single-stranded crossover between two homologous DNA duplexes (Holliday junction).. In terms of biological role, the RuvA-RuvB-RuvC complex processes Holliday junction (HJ) DNA during genetic recombination and DNA repair. Endonuclease that resolves HJ intermediates. Cleaves cruciform DNA by making single-stranded nicks across the HJ at symmetrical positions within the homologous arms, yielding a 5'-phosphate and a 3'-hydroxyl group; requires a central core of homology in the junction. The consensus cleavage sequence is 5'-(A/T)TT(C/G)-3'. Cleavage occurs on the 3'-side of the TT dinucleotide at the point of strand exchange. HJ branch migration catalyzed by RuvA-RuvB allows RuvC to scan DNA until it finds its consensus sequence, where it cleaves and resolves the cruciform DNA. This Psychrobacter arcticus (strain DSM 17307 / VKM B-2377 / 273-4) protein is Crossover junction endodeoxyribonuclease RuvC.